The chain runs to 394 residues: Keratin, type I cuticular Ha4 (394 aa).

A head region spans residues 1-56 (MSYSCCLPSLGCRTSCSSRPCVPPSCHGYTLPGACNIPANVSNCNWFCEGSFNGSE). The 312-residue stretch at 56–367 (EKETMQFLND…SLLESEDCKL (312 aa)) folds into the IF rod domain. Residues 57–91 (KETMQFLNDRLASYLEKVRQLERDNAELEKLIQER) are coil 1A. Positions 92 to 102 (SQQQEPLLCPS) are linker 1. Residues 103–203 (YQSYFKTIEE…HEEEVNTLRS (101 aa)) form a coil 1B region. Positions 204–219 (QLGDRLNVEVDTAPTV) are linker 12. The tract at residues 220–363 (DLNQVLNETR…NTYRSLLESE (144 aa)) is coil 2. The segment at 364–394 (DCKLPCNPCATTNASGNSCGPCGTSQKGCCN) is tail.

Belongs to the intermediate filament family. In terms of tissue distribution, expressed in the hair follicles.

The sequence is that of Keratin, type I cuticular Ha4 (KRT34) from Homo sapiens (Human).